The primary structure comprises 859 residues: DNA mismatch repair protein MutS (859 aa).

618–625 (GPNMGGKS) is an ATP binding site.

This sequence belongs to the DNA mismatch repair MutS family.

Its function is as follows. This protein is involved in the repair of mismatches in DNA. It is possible that it carries out the mismatch recognition step. This protein has a weak ATPase activity. In Shewanella sediminis (strain HAW-EB3), this protein is DNA mismatch repair protein MutS.